Here is a 94-residue protein sequence, read N- to C-terminus: Trp operon repressor homolog (94 aa).

A DNA-binding region spans residues 58 to 81; the sequence is QREIAEKYGVSIAQITRGSNALKG.

The protein belongs to the TrpR family. In terms of assembly, homodimer.

The protein localises to the cytoplasm. This protein is an aporepressor. When complexed with L-tryptophan it binds the operator region of the trp operon and prevents the initiation of transcription. The chain is Trp operon repressor homolog from Chlamydia trachomatis serovar L2 (strain ATCC VR-902B / DSM 19102 / 434/Bu).